The following is a 393-amino-acid chain: Acetate kinase (393 aa).

Residue Asn-6 participates in Mg(2+) binding. Lys-13 is an ATP binding site. Arg-87 is a binding site for substrate. Catalysis depends on Asp-143, which acts as the Proton donor/acceptor. Residues 203 to 207 (HLGNG), 278 to 280 (DMR), and 326 to 330 (GIGEN) each bind ATP. A Mg(2+)-binding site is contributed by Glu-380.

Belongs to the acetokinase family. In terms of assembly, homodimer. Requires Mg(2+) as cofactor. The cofactor is Mn(2+).

It localises to the cytoplasm. The enzyme catalyses acetate + ATP = acetyl phosphate + ADP. The protein operates within metabolic intermediate biosynthesis; acetyl-CoA biosynthesis; acetyl-CoA from acetate: step 1/2. Catalyzes the formation of acetyl phosphate from acetate and ATP. Can also catalyze the reverse reaction. The chain is Acetate kinase from Mycoplasma capricolum subsp. capricolum (strain California kid / ATCC 27343 / NCTC 10154).